Here is a 184-residue protein sequence, read N- to C-terminus: dCTP deaminase (184 aa).

DCTP is bound by residues 107–112, 131–133, Gln-152, Tyr-166, and Gln-176; these read KSTYAR and TLE. Glu-133 acts as the Proton donor/acceptor in catalysis.

The protein belongs to the dCTP deaminase family. In terms of assembly, homotrimer.

It catalyses the reaction dCTP + H2O + H(+) = dUTP + NH4(+). It functions in the pathway pyrimidine metabolism; dUMP biosynthesis; dUMP from dCTP (dUTP route): step 1/2. Its function is as follows. Catalyzes the deamination of dCTP to dUTP. This chain is dCTP deaminase, found in Novosphingobium aromaticivorans (strain ATCC 700278 / DSM 12444 / CCUG 56034 / CIP 105152 / NBRC 16084 / F199).